We begin with the raw amino-acid sequence, 197 residues long: tRNA(Phe) 7-((3-amino-3-carboxypropyl)-4-demethylwyosine(37)-N(4))-methyltransferase (197 aa).

Belongs to the TYW3 family.

The catalysed reaction is 4-demethyl-7-[(3S)-3-amino-3-carboxypropyl]wyosine(37) in tRNA(Phe) + S-adenosyl-L-methionine = 7-[(3S)-3-amino-3-carboxypropyl]wyosine(37) in tRNA(Phe) + S-adenosyl-L-homocysteine + H(+). In terms of biological role, S-adenosyl-L-methionine-dependent methyltransferase that acts as a component of the wyosine derivatives biosynthesis pathway. Probably methylates N-4 position of wybutosine-86 to produce wybutosine-72. This chain is tRNA(Phe) 7-((3-amino-3-carboxypropyl)-4-demethylwyosine(37)-N(4))-methyltransferase, found in Thermococcus sibiricus (strain DSM 12597 / MM 739).